Here is a 305-residue protein sequence, read N- to C-terminus: 5'-hydroxyaverantin dehydrogenase stcG (305 aa).

NADP(+) contacts are provided by Ser-25, Leu-27, Gln-48, Asp-68, Tyr-186, Lys-190, and Ser-221. Tyr-186 (proton acceptor) is an active-site residue. Catalysis depends on Lys-190, which acts as the Lowers pKa of active site Tyr.

This sequence belongs to the short-chain dehydrogenases/reductases (SDR) family.

The catalysed reaction is (1'S,5'S)-5'-hydroxyaverantin + NAD(+) = (S)-5'-oxoaverantin + NADH + H(+). The enzyme catalyses (1'S,5'R)-5'-hydroxyaverantin + NAD(+) = (S)-5'-oxoaverantin + NADH + 2 H(+). Its pathway is mycotoxin biosynthesis; sterigmatocystin biosynthesis. 5'-hydroxyaverantin dehydrogenase; part of the gene cluster that mediates the biosynthesis of sterigmatocystin (ST), a polyketide-derived furanocoumarin which is part of the most toxic and carcinogenic compounds among the known mycotoxins. The first step in the biosynthesis of sterigmatocystin is the production of hexanoate by the fatty acid synthase (FAS) units stcJ and stcK. The polyketide backbone is assembled by the non-reducing polyketide synthase stcA by condensation of the starter hexanoyl-CoA and 7 malonyl-CoA extender units followed by cyclization and release of norsolorinic acid. Norsolorinic acid is the first stable intermediate in the biosynthesis of sterigmatocystin and is converted into averantin (AVN) by the ketoreductase stcE which reduces the hexanoate ketone to an alcohol. Averantin is then oxidized into 5'-hydroxyaverantin (HAVN) by the cytochrome P450 monooxygenase stcF. 5'-hydroxyaverantin is further converted to 5'-oxyaverantin (OAVN) by the 5'-hydroxyaverantin dehydrogenase stcG. The next step is the conversion of OAVN into averufin (AVF) which is catalyzed by a yet to be identified enzyme. The cytochrome P450 monooxygenase stcB and the flavin-binding monooxygenase stcW are both required for the conversion of averufin to 1-hydroxyversicolorone. The esterase stcI probably catalyzes the formation of versiconal hemiacetal acetate from 1-hydroxyversicolorone. The oxydoreductase stcN then probably catalyzes the biosynthetic step from versiconal to versicolorin B (VERB). The next step is performed by the versicolorin B desaturase stcL to produce versicolorin A (VERA). The ketoreductase stcU and the cytochrome P450 monooxygenase stcS are involved in the conversion of versicolorin A to demethylsterigmatocystin. The Baeyer-Villiger oxidas stcQ and the reductase stcR might be involved in the biosynthetic step from versicolorin A to demethylsterigmatocystin. The final step in the biosynthesis of sterigmatocystin is the methylation of demethylsterigmatocystin catalyzed by the methyltransferase stcP. The sequence is that of 5'-hydroxyaverantin dehydrogenase stcG from Emericella nidulans (strain FGSC A4 / ATCC 38163 / CBS 112.46 / NRRL 194 / M139) (Aspergillus nidulans).